The primary structure comprises 99 residues: Aspartyl/glutamyl-tRNA(Asn/Gln) amidotransferase subunit C (99 aa).

Belongs to the GatC family. Heterotrimer of A, B and C subunits.

It catalyses the reaction L-glutamyl-tRNA(Gln) + L-glutamine + ATP + H2O = L-glutaminyl-tRNA(Gln) + L-glutamate + ADP + phosphate + H(+). It carries out the reaction L-aspartyl-tRNA(Asn) + L-glutamine + ATP + H2O = L-asparaginyl-tRNA(Asn) + L-glutamate + ADP + phosphate + 2 H(+). In terms of biological role, allows the formation of correctly charged Asn-tRNA(Asn) or Gln-tRNA(Gln) through the transamidation of misacylated Asp-tRNA(Asn) or Glu-tRNA(Gln) in organisms which lack either or both of asparaginyl-tRNA or glutaminyl-tRNA synthetases. The reaction takes place in the presence of glutamine and ATP through an activated phospho-Asp-tRNA(Asn) or phospho-Glu-tRNA(Gln). This chain is Aspartyl/glutamyl-tRNA(Asn/Gln) amidotransferase subunit C, found in Leptothrix cholodnii (strain ATCC 51168 / LMG 8142 / SP-6) (Leptothrix discophora (strain SP-6)).